A 213-amino-acid polypeptide reads, in one-letter code: Large ribosomal subunit protein uL3 (213 aa).

Residues 124-151 (KRHGQSRGPMAHGSRYHRRPGSMGSIAP) form a disordered region.

Belongs to the universal ribosomal protein uL3 family. In terms of assembly, part of the 50S ribosomal subunit. Forms a cluster with proteins L14 and L19.

One of the primary rRNA binding proteins, it binds directly near the 3'-end of the 23S rRNA, where it nucleates assembly of the 50S subunit. The polypeptide is Large ribosomal subunit protein uL3 (Geobacillus kaustophilus (strain HTA426)).